A 145-amino-acid polypeptide reads, in one-letter code: Transcriptional regulator SlyA (145 aa).

Residues 2 to 135 (ELPLGSDLAR…LALLVARLEK (134 aa)) form the HTH marR-type domain. Positions 49–72 (QIQLAKAIGIEQPSLVRTLDQLEE) form a DNA-binding region, H-T-H motif.

The protein belongs to the SlyA family. As to quaternary structure, homodimer.

Functionally, transcription regulator that can specifically activate or repress expression of target genes. The chain is Transcriptional regulator SlyA from Pectobacterium atrosepticum (strain SCRI 1043 / ATCC BAA-672) (Erwinia carotovora subsp. atroseptica).